Consider the following 382-residue polypeptide: Alanine racemase 1 (382 aa).

Catalysis depends on K39, which acts as the Proton acceptor; specific for D-alanine. N6-(pyridoxal phosphate)lysine is present on K39. Residue R138 coordinates substrate. The Proton acceptor; specific for L-alanine role is filled by Y265. M312 contributes to the substrate binding site.

The protein belongs to the alanine racemase family. Requires pyridoxal 5'-phosphate as cofactor.

The catalysed reaction is L-alanine = D-alanine. It participates in amino-acid biosynthesis; D-alanine biosynthesis; D-alanine from L-alanine: step 1/1. Catalyzes the interconversion of L-alanine and D-alanine. May also act on other amino acids. The sequence is that of Alanine racemase 1 (alr1) from Staphylococcus aureus (strain MRSA252).